A 431-amino-acid polypeptide reads, in one-letter code: E3 ubiquitin-protein ligase marc-3 (431 aa).

The segment at 5–74 (NASLGPAVCR…EICKFAFKIK (70 aa)) adopts an RING-CH-type zinc-finger fold. Residues cysteine 13, cysteine 16, cysteine 38, cysteine 40, histidine 48, cysteine 51, cysteine 64, and cysteine 67 each coordinate Zn(2+). 2 helical membrane-spanning segments follow: residues 98–118 (PFID…GVFM) and 157–177 (LFLF…VSAL). Disordered regions lie at residues 267-289 (TSPD…FGRR) and 327-349 (SRAT…RDMR). Basic and acidic residues predominate over residues 273 to 282 (NTHHHDESRN).

The protein resides in the cell membrane. Its subcellular location is the endosome membrane. It catalyses the reaction S-ubiquitinyl-[E2 ubiquitin-conjugating enzyme]-L-cysteine + [acceptor protein]-L-lysine = [E2 ubiquitin-conjugating enzyme]-L-cysteine + N(6)-ubiquitinyl-[acceptor protein]-L-lysine.. The protein operates within protein modification; protein ubiquitination. In terms of biological role, E3 ubiquitin-protein ligase which positively regulates the fast polyspermy block during fertilization, preventing entry of more than one sperm into the oocyte. After fertilization, required in the zygote for the selective degradation of a subset of maternal membrane proteins including cav-1, chs-1 and rme-2, probably by mediating their K63-linked polyubiquitination. The polypeptide is E3 ubiquitin-protein ligase marc-3 (Caenorhabditis elegans).